A 310-amino-acid chain; its full sequence is Putative integrase/recombinase y4rE (310 aa).

The region spanning 6–83 (RFLGEKVERY…VLRRFYEYLA (78 aa)) is the Core-binding (CB) domain. The Tyr recombinase domain occupies 104-301 (PPPRILSEAE…SVDLLAMAAE (198 aa)). Active-site residues include Arg148, Lys173, His245, Arg248, and His279. Tyr288 acts as the O-(3'-phospho-DNA)-tyrosine intermediate in catalysis.

It belongs to the 'phage' integrase family.

The chain is Putative integrase/recombinase y4rE from Sinorhizobium fredii (strain NBRC 101917 / NGR234).